The following is a 130-amino-acid chain: Glycine cleavage system H protein (130 aa).

Positions 25–107 constitute a Lipoyl-binding domain; it reads IATIGITEFA…YGEGWFLKVR (83 aa). Lysine 66 bears the N6-lipoyllysine mark.

The protein belongs to the GcvH family. The glycine cleavage system is composed of four proteins: P, T, L and H. It depends on (R)-lipoate as a cofactor.

Functionally, the glycine cleavage system catalyzes the degradation of glycine. The H protein shuttles the methylamine group of glycine from the P protein to the T protein. This Trichormus variabilis (strain ATCC 29413 / PCC 7937) (Anabaena variabilis) protein is Glycine cleavage system H protein.